The sequence spans 938 residues: Isoleucine--tRNA ligase (938 aa).

The short motif at 58–68 (PYANGHIHLGT) is the 'HIGH' region element. Residue glutamate 565 participates in L-isoleucyl-5'-AMP binding. The 'KMSKS' region motif lies at 606–610 (KMSKS). Residue lysine 609 coordinates ATP. The Zn(2+) site is built by cysteine 905, cysteine 908, cysteine 925, and cysteine 928.

The protein belongs to the class-I aminoacyl-tRNA synthetase family. IleS type 1 subfamily. Monomer. It depends on Zn(2+) as a cofactor.

It is found in the cytoplasm. The enzyme catalyses tRNA(Ile) + L-isoleucine + ATP = L-isoleucyl-tRNA(Ile) + AMP + diphosphate. In terms of biological role, catalyzes the attachment of isoleucine to tRNA(Ile). As IleRS can inadvertently accommodate and process structurally similar amino acids such as valine, to avoid such errors it has two additional distinct tRNA(Ile)-dependent editing activities. One activity is designated as 'pretransfer' editing and involves the hydrolysis of activated Val-AMP. The other activity is designated 'posttransfer' editing and involves deacylation of mischarged Val-tRNA(Ile). This is Isoleucine--tRNA ligase from Nitratidesulfovibrio vulgaris (strain DSM 19637 / Miyazaki F) (Desulfovibrio vulgaris).